We begin with the raw amino-acid sequence, 484 residues long: Acetyl-coenzyme A carboxylase carboxyl transferase subunit beta, chloroplastic (484 aa).

The CoA carboxyltransferase N-terminal domain maps to 223 to 484; sequence LWIQCDNCYG…LHAFFPLNKN (262 aa). 4 residues coordinate Zn(2+): cysteine 227, cysteine 230, cysteine 243, and cysteine 246. The C4-type zinc finger occupies 227–246; the sequence is CDNCYGLMYKKVKMNVCEQC.

Belongs to the AccD/PCCB family. In terms of assembly, acetyl-CoA carboxylase is a heterohexamer composed of biotin carboxyl carrier protein, biotin carboxylase and 2 subunits each of ACCase subunit alpha and ACCase plastid-coded subunit beta (accD). Requires Zn(2+) as cofactor.

It is found in the plastid. Its subcellular location is the chloroplast stroma. The enzyme catalyses N(6)-carboxybiotinyl-L-lysyl-[protein] + acetyl-CoA = N(6)-biotinyl-L-lysyl-[protein] + malonyl-CoA. The protein operates within lipid metabolism; malonyl-CoA biosynthesis; malonyl-CoA from acetyl-CoA: step 1/1. In terms of biological role, component of the acetyl coenzyme A carboxylase (ACC) complex. Biotin carboxylase (BC) catalyzes the carboxylation of biotin on its carrier protein (BCCP) and then the CO(2) group is transferred by the transcarboxylase to acetyl-CoA to form malonyl-CoA. The polypeptide is Acetyl-coenzyme A carboxylase carboxyl transferase subunit beta, chloroplastic (Crucihimalaya wallichii (Rock-cress)).